The sequence spans 517 residues: Aldehyde dehydrogenase X, mitochondrial (517 aa).

The N-terminal 17 residues, 1–17 (MLRFLAPRLLSLQGRTA), are a transit peptide targeting the mitochondrion. Position 51 is an N6-acetyllysine (lysine 51). At lysine 52 the chain carries N6-acetyllysine; alternate. The residue at position 52 (lysine 52) is an N6-succinyllysine; alternate. Lysine 81 carries the N6-succinyllysine modification. 262–267 (GSTEVG) provides a ligand contact to NAD(+). The active-site Proton acceptor is glutamate 285. Cysteine 319 serves as the catalytic Nucleophile. An N6-acetyllysine; alternate mark is found at lysine 364, lysine 383, lysine 399, lysine 414, and lysine 426. Residues lysine 364, lysine 383, lysine 399, lysine 414, and lysine 426 each carry the N6-succinyllysine; alternate modification. Lysine 429 carries the post-translational modification N6-acetyllysine.

It belongs to the aldehyde dehydrogenase family. As to quaternary structure, homotetramer. As to expression, liver, testis and to a lesser extent in brain.

The protein resides in the mitochondrion matrix. It carries out the reaction an aldehyde + NAD(+) + H2O = a carboxylate + NADH + 2 H(+). It participates in alcohol metabolism; ethanol degradation; acetate from ethanol: step 2/2. Its function is as follows. ALDHs play a major role in the detoxification of alcohol-derived acetaldehyde. They are involved in the metabolism of corticosteroids, biogenic amines, neurotransmitters, and lipid peroxidation. The sequence is that of Aldehyde dehydrogenase X, mitochondrial (ALDH1B1) from Homo sapiens (Human).